A 129-amino-acid chain; its full sequence is Large ribosomal subunit protein bL20 (129 aa).

Belongs to the bacterial ribosomal protein bL20 family.

In terms of biological role, binds directly to 23S ribosomal RNA and is necessary for the in vitro assembly process of the 50S ribosomal subunit. It is not involved in the protein synthesizing functions of that subunit. In Rhodococcus jostii (strain RHA1), this protein is Large ribosomal subunit protein bL20.